Consider the following 314-residue polypeptide: Probable phytol kinase 1, chloroplastic (314 aa).

A chloroplast-targeting transit peptide spans 1–62; the sequence is MAAAARPVDV…GVGAAAAPAV (62 aa). Transmembrane regions (helical) follow at residues 72–91, 111–131, 135–155, 181–201, 234–254, 266–286, and 294–314; these read AALRDCAATLLITAGAYSLV, IVHVLSGVLFMSSWPLFSNST, FFAAIVPLLNCIRLLTYGLRL, YVIVLLVSVLVFWRQSPIGIV, IGSISMFISGFLLSALMLFYF, LALGKLALVALAATVVECIPV, and ISVPLATMLAAYLLFGYSSCC.

Belongs to the polyprenol kinase family.

Its subcellular location is the plastid. The protein localises to the chloroplast membrane. The enzyme catalyses phytol + CTP = phytyl phosphate + CDP + H(+). It functions in the pathway cofactor biosynthesis; tocopherol biosynthesis. Involved in the activation and reutilization of phytol from chlorophyll degradation in plant metabolism, including tocopherol biosynthesis. Catalyzes the conversion of phytol to phytol monophosphate (PMP). The protein is Probable phytol kinase 1, chloroplastic of Oryza sativa subsp. japonica (Rice).